A 279-amino-acid polypeptide reads, in one-letter code: Rhamnulose-1-phosphate aldolase (279 aa).

Residue glutamate 115 is part of the active site. Residues histidine 138, histidine 140, and histidine 209 each coordinate Zn(2+).

The protein belongs to the aldolase class II family. RhaD subfamily. Zn(2+) serves as cofactor.

It is found in the cytoplasm. The enzyme catalyses L-rhamnulose 1-phosphate = (S)-lactaldehyde + dihydroxyacetone phosphate. It functions in the pathway carbohydrate degradation; L-rhamnose degradation; glycerone phosphate from L-rhamnose: step 3/3. In terms of biological role, catalyzes the reversible cleavage of L-rhamnulose-1-phosphate to dihydroxyacetone phosphate (DHAP) and L-lactaldehyde. The chain is Rhamnulose-1-phosphate aldolase from Enterococcus faecalis (strain ATCC 700802 / V583).